Consider the following 87-residue polypeptide: Small ribosomal subunit protein bS20 (87 aa).

Over residues 1–11 the composition is skewed to basic residues; that stretch reads MANHKSALKRI. Positions 1 to 23 are disordered; sequence MANHKSALKRIKQTEKRTERNRH.

Belongs to the bacterial ribosomal protein bS20 family.

Binds directly to 16S ribosomal RNA. In Geotalea daltonii (strain DSM 22248 / JCM 15807 / FRC-32) (Geobacter daltonii), this protein is Small ribosomal subunit protein bS20.